Consider the following 115-residue polypeptide: Small ribosomal subunit protein uS13 (115 aa).

Residues 92–115 form a disordered region; the sequence is RRGLPVRGQNTKNNARTRKGSKRK. A compositionally biased stretch (basic residues) spans 106–115; it reads ARTRKGSKRK.

It belongs to the universal ribosomal protein uS13 family. Part of the 30S ribosomal subunit. Forms a loose heterodimer with protein S19. Forms two bridges to the 50S subunit in the 70S ribosome.

Functionally, located at the top of the head of the 30S subunit, it contacts several helices of the 16S rRNA. In the 70S ribosome it contacts the 23S rRNA (bridge B1a) and protein L5 of the 50S subunit (bridge B1b), connecting the 2 subunits; these bridges are implicated in subunit movement. Contacts the tRNAs in the A and P-sites. This chain is Small ribosomal subunit protein uS13, found in Lactobacillus gasseri (strain ATCC 33323 / DSM 20243 / BCRC 14619 / CIP 102991 / JCM 1131 / KCTC 3163 / NCIMB 11718 / NCTC 13722 / AM63).